The following is a 200-amino-acid chain: GTP-binding protein ypt2 (200 aa).

Residue 16 to 23 (GDSGVGKS) participates in GTP binding. Residues 38–46 (FITTIGIDF) carry the Effector region motif. GTP contacts are provided by residues 64-68 (DTAGQ) and 122-125 (NKCD). S-geranylgeranyl cysteine attachment occurs at residues Cys199 and Cys200.

Belongs to the small GTPase superfamily. Rab family.

It is found in the cell membrane. Functionally, protein transport. Probably involved in vesicular traffic. In Schizosaccharomyces pombe (strain 972 / ATCC 24843) (Fission yeast), this protein is GTP-binding protein ypt2 (ypt2).